A 453-amino-acid chain; its full sequence is Ribosomal protein uS12 methylthiotransferase RimO (453 aa).

Residues 6–116 enclose the MTTase N-terminal domain; it reads PTVGIVSLGC…VLTAVHEAIA (111 aa). [4Fe-4S] cluster-binding residues include cysteine 15, cysteine 51, cysteine 80, cysteine 148, cysteine 152, and cysteine 155. Residues 134–371 form the Radical SAM core domain; sequence LTPKHFAYLK…MQLQQQISAN (238 aa). In terms of domain architecture, TRAM spans 374–440; it reads QAKIGKTIQV…EYDLWATPVG (67 aa).

The protein belongs to the methylthiotransferase family. RimO subfamily. [4Fe-4S] cluster is required as a cofactor.

Its subcellular location is the cytoplasm. It catalyses the reaction L-aspartate(89)-[ribosomal protein uS12]-hydrogen + (sulfur carrier)-SH + AH2 + 2 S-adenosyl-L-methionine = 3-methylsulfanyl-L-aspartate(89)-[ribosomal protein uS12]-hydrogen + (sulfur carrier)-H + 5'-deoxyadenosine + L-methionine + A + S-adenosyl-L-homocysteine + 2 H(+). Its function is as follows. Catalyzes the methylthiolation of an aspartic acid residue of ribosomal protein uS12. This is Ribosomal protein uS12 methylthiotransferase RimO from Hydrogenovibrio crunogenus (strain DSM 25203 / XCL-2) (Thiomicrospira crunogena).